Here is a 520-residue protein sequence, read N- to C-terminus: 2-isopropylmalate synthase (520 aa).

The 263-residue stretch at 12 to 274 folds into the Pyruvate carboxyltransferase domain; that stretch reads IRIFDTTLRD…DTAINTPRIV (263 aa). 4 residues coordinate Mn(2+): D21, H209, H211, and N245. A regulatory domain region spans residues 396 to 520; that stretch reads RLASMTISDV…VVAGKTAAVA (125 aa).

This sequence belongs to the alpha-IPM synthase/homocitrate synthase family. LeuA type 1 subfamily. As to quaternary structure, homodimer. The cofactor is Mn(2+).

It is found in the cytoplasm. The enzyme catalyses 3-methyl-2-oxobutanoate + acetyl-CoA + H2O = (2S)-2-isopropylmalate + CoA + H(+). It functions in the pathway amino-acid biosynthesis; L-leucine biosynthesis; L-leucine from 3-methyl-2-oxobutanoate: step 1/4. Its function is as follows. Catalyzes the condensation of the acetyl group of acetyl-CoA with 3-methyl-2-oxobutanoate (2-ketoisovalerate) to form 3-carboxy-3-hydroxy-4-methylpentanoate (2-isopropylmalate). The polypeptide is 2-isopropylmalate synthase (Xanthomonas campestris pv. campestris (strain B100)).